Here is a 447-residue protein sequence, read N- to C-terminus: Drebrin-like protein A (447 aa).

Residues 2–133 (SVNLSKNGAA…EPESIMEKVA (132 aa)) form the ADF-H domain. Disordered stretches follow at residues 141–160 (NFHK…VGSV) and 184–368 (KDEE…TENQ). Positions 180 to 245 (AKAEKDEEER…EQEETEKQQT (66 aa)) form a coiled coil. Over residues 184–242 (KDEEERRMEENRRANSEKDRLERERKEREQREAETREQRFRERAKEIDAQRKEQEETEK) the composition is skewed to basic and acidic residues. Over residues 246-255 (VPASQRSVNP) the composition is skewed to polar residues. The segment covering 319 to 328 (PESPVPPVSH) has biased composition (pro residues). Residues 345-365 (QEEENIYQDATEDQNIYEDTT) are compositionally biased toward acidic residues. Residues 388–447 (EKGVCARALYDYQAADDTEISFDPDDLITQIQFIDEGWWRGFSPAGHFGMFPANYVELLE) enclose the SH3 domain.

Belongs to the ABP1 family.

It localises to the cytoplasm. The protein resides in the cytoskeleton. It is found in the cell projection. The protein localises to the lamellipodium. Its subcellular location is the ruffle. It localises to the cell cortex. The protein resides in the cytosol. It is found in the synapse. The protein localises to the perikaryon. Its subcellular location is the neuron projection. It localises to the cell membrane. The protein resides in the cytoplasmic vesicle. It is found in the clathrin-coated vesicle membrane. The protein localises to the golgi apparatus membrane. Its subcellular location is the podosome. It localises to the early endosome. The protein resides in the dendrite. It is found in the postsynaptic density. Functionally, adapter protein that binds F-actin and dynamin, and thereby plays a role in receptor-mediated endocytosis. Plays a role in the reorganization of the actin cytoskeleton, formation of cell projections, such as neurites, in neuron morphogenesis and synapse formation. Does not bind G-actin and promote actin polymerization by itself, but excerts its functions by interaction with other proteins. Required for the formation of organized podosome rosettes. The protein is Drebrin-like protein A (dbnl-a) of Xenopus laevis (African clawed frog).